A 755-amino-acid chain; its full sequence is Xaa-Pro dipeptidyl-peptidase (755 aa).

Active-site charge relay system residues include Ser348, Asp468, and His498.

Belongs to the peptidase S15 family. As to quaternary structure, homodimer.

It is found in the cytoplasm. The enzyme catalyses Hydrolyzes Xaa-Pro-|- bonds to release unblocked, N-terminal dipeptides from substrates including Ala-Pro-|-p-nitroanilide and (sequentially) Tyr-Pro-|-Phe-Pro-|-Gly-Pro-|-Ile.. Its function is as follows. Removes N-terminal dipeptides sequentially from polypeptides having unsubstituted N-termini provided that the penultimate residue is proline. In Streptococcus thermophilus, this protein is Xaa-Pro dipeptidyl-peptidase.